The chain runs to 261 residues: uncharacterized protein (261 aa).

The first 22 residues, 1–22 (MGYSKRFALYISVMILIFAIAG), serve as a signal peptide directing secretion. The N-palmitoyl cysteine moiety is linked to residue Cys23. The S-diacylglycerol cysteine moiety is linked to residue Cys23.

It belongs to the staphylococcal tandem lipoprotein family.

It is found in the cell membrane. This is an uncharacterized protein from Staphylococcus aureus (strain N315).